A 692-amino-acid chain; its full sequence is DNA ligase (692 aa).

Residues 35 to 39 (DLVYD), 88 to 89 (SL), and Glu-117 each bind NAD(+). Lys-119 (N6-AMP-lysine intermediate) is an active-site residue. Arg-140, Glu-176, Lys-301, and Lys-325 together coordinate NAD(+). Residues Cys-416, Cys-419, Cys-434, and Cys-439 each contribute to the Zn(2+) site. The 82-residue stretch at 611 to 692 (LTNQSNSWAS…FDLIKNSKKT (82 aa)) folds into the BRCT domain.

This sequence belongs to the NAD-dependent DNA ligase family. LigA subfamily. The cofactor is Mg(2+). It depends on Mn(2+) as a cofactor.

The catalysed reaction is NAD(+) + (deoxyribonucleotide)n-3'-hydroxyl + 5'-phospho-(deoxyribonucleotide)m = (deoxyribonucleotide)n+m + AMP + beta-nicotinamide D-nucleotide.. DNA ligase that catalyzes the formation of phosphodiester linkages between 5'-phosphoryl and 3'-hydroxyl groups in double-stranded DNA using NAD as a coenzyme and as the energy source for the reaction. It is essential for DNA replication and repair of damaged DNA. The chain is DNA ligase from Mesomycoplasma hyopneumoniae (strain 7448) (Mycoplasma hyopneumoniae).